The following is a 306-amino-acid chain: Glutaminase (306 aa).

Ser64, Asn115, Glu159, Asn166, Tyr190, Tyr242, and Val260 together coordinate substrate.

Belongs to the glutaminase family. As to quaternary structure, homotetramer.

The enzyme catalyses L-glutamine + H2O = L-glutamate + NH4(+). This chain is Glutaminase, found in Aliivibrio fischeri (strain MJ11) (Vibrio fischeri).